A 348-amino-acid polypeptide reads, in one-letter code: Large ribosomal subunit protein uL10 (348 aa).

Positions 291-348 are disordered; the sequence is LPEELRGVSAADTGAAEEEESTDEEAADADQADAAEDDDAADDDGDDEDAGDALGSLF. Over residues 305-341 the composition is skewed to acidic residues; sequence AAEEEESTDEEAADADQADAAEDDDAADDDGDDEDAG.

It belongs to the universal ribosomal protein uL10 family. In terms of assembly, part of the 50S ribosomal subunit. Forms part of the ribosomal stalk which helps the ribosome interact with GTP-bound translation factors. Forms a heptameric L10(L12)2(L12)2(L12)2 complex, where L10 forms an elongated spine to which the L12 dimers bind in a sequential fashion.

Its function is as follows. Forms part of the ribosomal stalk, playing a central role in the interaction of the ribosome with GTP-bound translation factors. The polypeptide is Large ribosomal subunit protein uL10 (Haloferax volcanii (strain ATCC 29605 / DSM 3757 / JCM 8879 / NBRC 14742 / NCIMB 2012 / VKM B-1768 / DS2) (Halobacterium volcanii)).